A 1202-amino-acid chain; its full sequence is DNA-directed RNA polymerase subunit beta (1202 aa).

Residues leucine 1151 to valine 1162 are compositionally biased toward acidic residues. Positions leucine 1151–asparagine 1202 are disordered. Over residues serine 1189–asparagine 1202 the composition is skewed to polar residues.

The protein belongs to the RNA polymerase beta chain family. As to quaternary structure, the RNAP catalytic core consists of 2 alpha, 1 beta, 1 beta' and 1 omega subunit. When a sigma factor is associated with the core the holoenzyme is formed, which can initiate transcription.

It carries out the reaction RNA(n) + a ribonucleoside 5'-triphosphate = RNA(n+1) + diphosphate. In terms of biological role, DNA-dependent RNA polymerase catalyzes the transcription of DNA into RNA using the four ribonucleoside triphosphates as substrates. This chain is DNA-directed RNA polymerase subunit beta, found in Pediococcus pentosaceus (strain ATCC 25745 / CCUG 21536 / LMG 10740 / 183-1w).